The chain runs to 1467 residues: Gag-Pol polyprotein (1467 aa).

A lipid anchor (N-myristoyl glycine; by host) is attached at G2. The Nuclear export signal motif lies at 16 to 22 (FEHIRLR). The Nuclear localization signal motif lies at 26–32 (KKKYQIK). The tract at residues 116–144 (NAERNTTETSSGQKKNDKGVTVPPGGSQN) is disordered. 2 CCHC-type zinc fingers span residues 402-419 (VKCYNCGKFGHMQRQCPE) and 423-440 (MRCLKCGKPGHLAKDCRG). Residues 535 to 606 (IKALLDTGAD…TPINIIGRNL (72 aa)) enclose the Peptidase A2 domain. Residue D540 is the For protease activity; shared with dimeric partner of the active site. The Reverse transcriptase domain occupies 662–852 (EGKISRVGGE…PPYEWMGYKL (191 aa)). Residues D728, D803, and D804 each contribute to the Mg(2+) site. An RT 'primer grip' region spans residues 845–853 (YEWMGYKLW). Positions 1015 to 1031 (WEQWWADYWQVSWIPEW) match the Tryptophan repeat motif motif. The region spanning 1050–1173 (PIPKEDVYYV…IDKLVSKGIR (124 aa)) is the RNase H type-1 domain. Residues D1114 and D1165 each contribute to the Mg(2+) site. The Integrase-type zinc-finger motif lies at 1179-1220 (EKIEEAQEKHERYHNNWKNLADTYGLPQIVAKEIVAMCPKCQ). Positions 1188, 1192, 1216, and 1219 each coordinate Zn(2+). Residues 1230 to 1380 (VDASPGTWQM…TSAERLINII (151 aa)) enclose the Integrase catalytic domain. Mg(2+) contacts are provided by D1240 and D1292. Residues 1399 to 1446 (FRVYYREGRDPVWKGPAQLIWKGEGAVVLKDGSDLKVVPRRKAKIIKD) constitute a DNA-binding region (integrase-type). Positions 1447–1467 (YEPKQRVGNEGDVEGTRGSDN) are disordered.

In terms of assembly, homotrimer. Interacts with gp41 (via C-terminus). Homodimer. The active site consists of two apposed aspartic acid residues. As to quaternary structure, heterodimer of p66 RT and p51 RT (RT p66/p51). Heterodimerization of RT is essential for DNA polymerase activity. Despite the sequence identities, p66 RT and p51 RT have distinct folding. In terms of assembly, homotetramer; may further associate as a homohexadecamer. Requires Mg(2+) as cofactor. Specific enzymatic cleavages by the viral protease yield mature proteins. The protease is released by autocatalytic cleavage. The polyprotein is cleaved during and after budding, this process is termed maturation. Proteolytic cleavage of p66 RT removes the RNase H domain to yield the p51 RT subunit. In terms of processing, capsid protein p24 is phosphorylated.

It is found in the virion. The protein localises to the host nucleus. Its subcellular location is the host cytoplasm. The protein resides in the host cell membrane. The catalysed reaction is Specific for a P1 residue that is hydrophobic, and P1' variable, but often Pro.. It carries out the reaction Endohydrolysis of RNA in RNA/DNA hybrids. Three different cleavage modes: 1. sequence-specific internal cleavage of RNA. Human immunodeficiency virus type 1 and Moloney murine leukemia virus enzymes prefer to cleave the RNA strand one nucleotide away from the RNA-DNA junction. 2. RNA 5'-end directed cleavage 13-19 nucleotides from the RNA end. 3. DNA 3'-end directed cleavage 15-20 nucleotides away from the primer terminus.. The enzyme catalyses 3'-end directed exonucleolytic cleavage of viral RNA-DNA hybrid.. It catalyses the reaction DNA(n) + a 2'-deoxyribonucleoside 5'-triphosphate = DNA(n+1) + diphosphate. With respect to regulation, the viral protease is inhibited by many synthetic protease inhibitors (PIs), such as amprenavir, atazanavir, indinavir, loprinavir, nelfinavir, ritonavir and saquinavir. RT can be inhibited either by nucleoside RT inhibitors (NRTIs) or by non nucleoside RT inhibitors (NNRTIs). NRTIs act as chain terminators, whereas NNRTIs inhibit DNA polymerization by binding a small hydrophobic pocket near the RT active site and inducing an allosteric change in this region. Classical NRTIs are abacavir, adefovir (PMEA), didanosine (ddI), lamivudine (3TC), stavudine (d4T), tenofovir (PMPA), zalcitabine (ddC), and zidovudine (AZT). Classical NNRTIs are atevirdine (BHAP U-87201E), delavirdine, efavirenz (DMP-266), emivirine (I-EBU), and nevirapine (BI-RG-587). The tritherapies used as a basic effective treatment of AIDS associate two NRTIs and one NNRTI. Use of protease inhibitors in tritherapy regimens permit more ambitious therapeutic strategies. Gag-Pol polyprotein and Gag polyprotein may regulate their own translation, by the binding genomic RNA in the 5'-UTR. At low concentration, Gag-Pol and Gag would promote translation, whereas at high concentration, the polyproteins encapsidate genomic RNA and then shut off translation. Its function is as follows. Matrix protein p17 has two main functions: in infected cell, it targets Gag and Gag-pol polyproteins to the plasma membrane via a multipartite membrane-binding signal, that includes its myristointegration complex. The myristoylation signal and the NLS exert conflicting influences its subcellular localization. The key regulation of these motifs might be phosphorylation of a portion of MA molecules on the C-terminal tyrosine at the time of virus maturation, by virion-associated cellular tyrosine kinase. Implicated in the release from host cell mediated by Vpu. In terms of biological role, capsid protein p24 forms the conical core that encapsulates the genomic RNA-nucleocapsid complex in the virion. The core is constituted by capsid protein hexamer subunits. The core is disassembled soon after virion entry. Interaction with host PPIA/CYPA protects the virus from restriction by host TRIM5-alpha and from an unknown antiviral activity in host cells. This capsid restriction by TRIM5 is one of the factors which restricts SIV to the simian species. Functionally, nucleocapsid protein p7 encapsulates and protects viral dimeric unspliced (genomic) RNA. Binds these RNAs through its zinc fingers. Facilitates rearangement of nucleic acid secondary structure during retrotranscription of genomic RNA. This capability is referred to as nucleic acid chaperone activity. The aspartyl protease mediates proteolytic cleavages of Gag and Gag-Pol polyproteins during or shortly after the release of the virion from the plasma membrane. Cleavages take place as an ordered, step-wise cascade to yield mature proteins. This process is called maturation. Displays maximal activity during the budding process just prior to particle release from the cell. Also cleaves Nef and Vif, probably concomitantly with viral structural proteins on maturation of virus particles. Hydrolyzes host EIF4GI and PABP1 in order to shut off the capped cellular mRNA translation. The resulting inhibition of cellular protein synthesis serves to ensure maximal viral gene expression and to evade host immune response. Its function is as follows. Reverse transcriptase/ribonuclease H (RT) is a multifunctional enzyme that converts the viral dimeric RNA genome into dsDNA in the cytoplasm, shortly after virus entry into the cell. This enzyme displays a DNA polymerase activity that can copy either DNA or RNA templates, and a ribonuclease H (RNase H) activity that cleaves the RNA strand of RNA-DNA heteroduplexes in a partially processive 3' to 5' endonucleasic mode. Conversion of viral genomic RNA into dsDNA requires many steps. A tRNA binds to the primer-binding site (PBS) situated at the 5'-end of the viral RNA. RT uses the 3' end of the tRNA primer to perform a short round of RNA-dependent minus-strand DNA synthesis. The reading proceeds through the U5 region and ends after the repeated (R) region which is present at both ends of viral RNA. The portion of the RNA-DNA heteroduplex is digested by the RNase H, resulting in a ssDNA product attached to the tRNA primer. This ssDNA/tRNA hybridizes with the identical R region situated at the 3' end of viral RNA. This template exchange, known as minus-strand DNA strong stop transfer, can be either intra- or intermolecular. RT uses the 3' end of this newly synthesized short ssDNA to perform the RNA-dependent minus-strand DNA synthesis of the whole template. RNase H digests the RNA template except for two polypurine tracts (PPTs) situated at the 5'-end and near the center of the genome. It is not clear if both polymerase and RNase H activities are simultaneous. RNase H can probably proceed both in a polymerase-dependent (RNA cut into small fragments by the same RT performing DNA synthesis) and a polymerase-independent mode (cleavage of remaining RNA fragments by free RTs). Secondly, RT performs DNA-directed plus-strand DNA synthesis using the PPTs that have not been removed by RNase H as primers. PPTs and tRNA primers are then removed by RNase H. The 3' and 5' ssDNA PBS regions hybridize to form a circular dsDNA intermediate. Strand displacement synthesis by RT to the PBS and PPT ends produces a blunt ended, linear dsDNA copy of the viral genome that includes long terminal repeats (LTRs) at both ends. In terms of biological role, integrase catalyzes viral DNA integration into the host chromosome, by performing a series of DNA cutting and joining reactions. This enzyme activity takes place after virion entry into a cell and reverse transcription of the RNA genome in dsDNA. The first step in the integration process is 3' processing. This step requires a complex comprising the viral genome, matrix protein, Vpr and integrase. This complex is called the pre-integration complex (PIC). The integrase protein removes 2 nucleotides from each 3' end of the viral DNA, leaving recessed CA OH's at the 3' ends. In the second step, the PIC enters cell nucleus. This process is mediated through integrase and Vpr proteins, and allows the virus to infect a non dividing cell. This ability to enter the nucleus is specific of lentiviruses, other retroviruses cannot and rely on cell division to access cell chromosomes. In the third step, termed strand transfer, the integrase protein joins the previously processed 3' ends to the 5' ends of strands of target cellular DNA at the site of integration. The 5'-ends are produced by integrase-catalyzed staggered cuts, 5 bp apart. A Y-shaped, gapped, recombination intermediate results, with the 5'-ends of the viral DNA strands and the 3' ends of target DNA strands remaining unjoined, flanking a gap of 5 bp. The last step is viral DNA integration into host chromosome. This involves host DNA repair synthesis in which the 5 bp gaps between the unjoined strands are filled in and then ligated. Since this process occurs at both cuts flanking the SIV genome, a 5 bp duplication of host DNA is produced at the ends of SIV integration. Alternatively, Integrase may catalyze the excision of viral DNA just after strand transfer, this is termed disintegration. This chain is Gag-Pol polyprotein (gag-pol), found in Cercopithecidae (Old World monkeys).